The sequence spans 262 residues: PsbP domain-containing protein 6, chloroplastic (262 aa).

Cysteine 128 and cysteine 132 are joined by a disulfide.

Belongs to the PsbP family.

It localises to the plastid. It is found in the chloroplast thylakoid lumen. May be involved in the redox regulation of photosystem II. In Arabidopsis thaliana (Mouse-ear cress), this protein is PsbP domain-containing protein 6, chloroplastic (PPD6).